The sequence spans 751 residues: CCR4-NOT transcription complex subunit 3 (751 aa).

The interval A240 to A534 is disordered. A compositionally biased stretch (low complexity) spans S257–S268. Basic and acidic residues predominate over residues D284–D293. T292 is subject to Phosphothreonine. Residues S294–Q315 show a composition bias toward polar residues. S299 carries the post-translational modification Phosphoserine. Over residues P317 to T330 the composition is skewed to pro residues. A compositionally biased stretch (polar residues) spans G339–A348. The segment covering S441–S450 has biased composition (low complexity). Residues A463 to T472 are compositionally biased toward polar residues. Residues A473–L498 show a composition bias toward low complexity. The residue at position 540 (S540) is a Phosphoserine. A repressor domain region spans residues E659 to Q751.

This sequence belongs to the CNOT2/3/5 family. As to quaternary structure, component of the CCR4-NOT complex; distinct complexes seem to exist that differ in the participation of probably mutually exclusive catalytic subunits. In the complex interacts directly with CNOT2. Interacts with TIP120B and NANOS2. Interacts with EBF1. Interacts in an RNA-independent manner with BICC1 (via KH domains).

The protein localises to the nucleus. The protein resides in the cytoplasm. Its subcellular location is the P-body. Its function is as follows. Component of the CCR4-NOT complex which is one of the major cellular mRNA deadenylases and is linked to various cellular processes including bulk mRNA degradation, miRNA-mediated repression, translational repression during translational initiation and general transcription regulation. Additional complex functions may be a consequence of its influence on mRNA expression. May be involved in metabolic regulation; may be involved in recruitment of the CCR4-NOT complex to deadenylation target mRNAs involved in energy metabolism. Involved in mitotic progression and regulation of the spindle assembly checkpoint by regulating the stability of MAD1L1 mRNA. Can repress transcription and may link the CCR4-NOT complex to transcriptional regulation; the repressive function may involve histone deacetylases. Involved in the maintenance of embryonic stem (ES) cell identity; prevents their differentiation towards extraembryonic trophectoderm lineages. The chain is CCR4-NOT transcription complex subunit 3 (Cnot3) from Mus musculus (Mouse).